We begin with the raw amino-acid sequence, 455 residues long: tRNA modification GTPase MnmE (455 aa).

(6S)-5-formyl-5,6,7,8-tetrahydrofolate-binding residues include arginine 24, glutamate 81, and lysine 120. The TrmE-type G domain maps to 216-378 (GMTVVIAGRP…LREHLKACMG (163 aa)). Asparagine 226 lines the K(+) pocket. GTP contacts are provided by residues 226-231 (NAGKSS), 245-251 (TDIAGTT), 270-273 (DTAG), 335-338 (NKAD), and 359-361 (SAR). Serine 230 is a Mg(2+) binding site. The K(+) site is built by threonine 245, isoleucine 247, and threonine 250. Mg(2+) is bound at residue threonine 251. Lysine 455 lines the (6S)-5-formyl-5,6,7,8-tetrahydrofolate pocket.

Belongs to the TRAFAC class TrmE-Era-EngA-EngB-Septin-like GTPase superfamily. TrmE GTPase family. As to quaternary structure, homodimer. Heterotetramer of two MnmE and two MnmG subunits. K(+) serves as cofactor.

Its subcellular location is the cytoplasm. Functionally, exhibits a very high intrinsic GTPase hydrolysis rate. Involved in the addition of a carboxymethylaminomethyl (cmnm) group at the wobble position (U34) of certain tRNAs, forming tRNA-cmnm(5)s(2)U34. The polypeptide is tRNA modification GTPase MnmE (Pseudomonas paraeruginosa (strain DSM 24068 / PA7) (Pseudomonas aeruginosa (strain PA7))).